A 160-amino-acid polypeptide reads, in one-letter code: uncharacterized protein (160 aa).

The Extracellular portion of the chain corresponds to 1–33 (MPLRPCRHHQGFLPKKQWRAKFPQLIVLMGRVA). The chain crosses the membrane as a helical span at residues 34–54 (AEELLPAVAVAAVVVAVVVAV). Over 55–68 (ERVVPLLFVHRPDS) the chain is Cytoplasmic. The chain crosses the membrane as a helical span at residues 69 to 89 (FFLIFFFQSCFVCCCCCCSCS). Over 90–119 (TSLKAYSSEKEKQKYGKRGNGNTPLVQRLV) the chain is Extracellular. A helical transmembrane segment spans residues 120 to 140 (TLSYLALLILVLSIELLTWFV). At 141-160 (KKQRTGNKKQKDKEKNALLL) the chain is on the cytoplasmic side.

It localises to the membrane. This is an uncharacterized protein from Saccharomyces cerevisiae (strain ATCC 204508 / S288c) (Baker's yeast).